The primary structure comprises 282 residues: Parvulin-like PPIase (282 aa).

Residues 1 to 20 form the signal peptide; the sequence is MKKLSVIFLSVSMLSSIAFC. Positions 138-231 constitute a PpiC domain; that stretch reads KEQIKVAHIL…FGWHIIKVLE (94 aa).

Belongs to the PpiC/parvulin rotamase family.

It is found in the cell outer membrane. The enzyme catalyses [protein]-peptidylproline (omega=180) = [protein]-peptidylproline (omega=0). The polypeptide is Parvulin-like PPIase (plp) (Rickettsia typhi (strain ATCC VR-144 / Wilmington)).